The primary structure comprises 189 residues: GTP cyclohydrolase 1 (189 aa).

Zn(2+)-binding residues include Cys79, His82, and Cys150.

The protein belongs to the GTP cyclohydrolase I family. Homomer.

It carries out the reaction GTP + H2O = 7,8-dihydroneopterin 3'-triphosphate + formate + H(+). It participates in cofactor biosynthesis; 7,8-dihydroneopterin triphosphate biosynthesis; 7,8-dihydroneopterin triphosphate from GTP: step 1/1. The polypeptide is GTP cyclohydrolase 1 (Rickettsia rickettsii (strain Iowa)).